The following is a 350-amino-acid chain: Hydroxymethylglutaryl-CoA synthase (350 aa).

The Proton donor/acceptor role is filled by Glu83. The active-site Acyl-thioester intermediate is the Cys115. The (3S)-3-hydroxy-3-methylglutaryl-CoA site is built by Cys115 and Thr156. Arg204 lines the CoA pocket. (3S)-3-hydroxy-3-methylglutaryl-CoA is bound by residues Thr206 and His239. His239 (proton donor/acceptor) is an active-site residue. Position 244 (Lys244) interacts with CoA. (3S)-3-hydroxy-3-methylglutaryl-CoA is bound by residues Asn271 and Ser301.

The protein belongs to the thiolase-like superfamily. Archaeal HMG-CoA synthase family. As to quaternary structure, interacts with acetoacetyl-CoA thiolase that catalyzes the precedent step in the pathway and with a DUF35 protein. The acetoacetyl-CoA thiolase/HMG-CoA synthase complex channels the intermediate via a fused CoA-binding site, which allows for efficient coupling of the endergonic thiolase reaction with the exergonic HMGCS reaction.

The enzyme catalyses acetoacetyl-CoA + acetyl-CoA + H2O = (3S)-3-hydroxy-3-methylglutaryl-CoA + CoA + H(+). It functions in the pathway metabolic intermediate biosynthesis; (R)-mevalonate biosynthesis; (R)-mevalonate from acetyl-CoA: step 2/3. Functionally, catalyzes the condensation of acetyl-CoA with acetoacetyl-CoA to form 3-hydroxy-3-methylglutaryl-CoA (HMG-CoA). Functions in the mevalonate (MVA) pathway leading to isopentenyl diphosphate (IPP), a key precursor for the biosynthesis of isoprenoid compounds that are building blocks of archaeal membrane lipids. This chain is Hydroxymethylglutaryl-CoA synthase, found in Pyrococcus furiosus (strain ATCC 43587 / DSM 3638 / JCM 8422 / Vc1).